Here is a 248-residue protein sequence, read N- to C-terminus: 14-3-3 protein sigma (248 aa).

Phosphoserine is present on residues Ser-5, Ser-74, and Ser-248.

Belongs to the 14-3-3 family. In terms of assembly, homodimer. Interacts with KRT17 and SAMSN1. Found in a complex with XPO7, EIF4A1, ARHGAP1, VPS26A, VPS29 and VPS35. Interacts with GAB2. Interacts with SRPK2. Interacts with COPS6. Interacts with COP1; this interaction leads to proteasomal degradation. Interacts with the 'Thr-369' phosphorylated form of DAPK2. Interacts with PI4KB. Interacts with SLITRK1. Interacts with LRRK2; this interaction is dependent on LRRK2 phosphorylation. Interacts with PKP3 (via N-terminus); the interaction maintains the cytoplasmic pool of PKP3, facilitates PKP3 exchange at desmosomes and restricts PKP3 localization to existing desmosome cell junctions. Interacts with LCP2. Post-translationally, ubiquitinated. Ubiquitination by RFFL induces proteasomal degradation and indirectly regulates p53/TP53 activation. As to expression, expressed in dorsal skin (at protein level). Expressed in the basal layer of skin epithelium and in outer root sheath of hair follicle.

The protein localises to the cytoplasm. The protein resides in the nucleus. It is found in the secreted. Functionally, adapter protein implicated in the regulation of a large spectrum of both general and specialized signaling pathways. Binds to a large number of partners, usually by recognition of a phosphoserine or phosphothreonine motif. Binding generally results in the modulation of the activity of the binding partner. Promotes cytosolic retention of GBP1 GTPase by binding to phosphorylated GBP1, thereby inhibiting the innate immune response. Also acts as a TP53/p53-regulated inhibitor of G2/M progression. When bound to KRT17, regulates protein synthesis and epithelial cell growth by stimulating Akt/mTOR pathway. Acts to maintain desmosome cell junction adhesion in epithelial cells via interacting with and sequestering PKP3 to the cytoplasm, thereby restricting its translocation to existing desmosome structures and therefore maintaining desmosome protein homeostasis. Also acts to facilitate PKP3 exchange at desmosome plaques, thereby maintaining keratinocyte intercellular adhesion. May also regulate MDM2 autoubiquitination and degradation and thereby activate p53/TP53. This Mus musculus (Mouse) protein is 14-3-3 protein sigma (Sfn).